Reading from the N-terminus, the 630-residue chain is A-type voltage-gated potassium channel KCND2 (630 aa).

Over 1–184 (MAAGVAAWLP…FENPHTSTMA (184 aa)) the chain is Cytoplasmic. Residues 2–20 (AAGVAAWLPFARAAAIGWM) are interaction with KCNIP1, KCNIP2, and other family members. A Phosphothreonine modification is found at Thr-38. The segment at 71–90 (ERDFFYHPETQQYFFDRDPD) is interaction with KCNIP1. Positions 105, 111, 132, and 133 each coordinate Zn(2+). A helical membrane pass occupies residues 185–206 (LVFYYVTGFFIAVSVIANVVET). Over 207–226 (VPCGSSPGHIKELPCGERYA) the chain is Extracellular. A helical transmembrane segment spans residues 227 to 249 (VAFFCLDTACVMIFTVEYLLRLA). Over 250 to 256 (AAPSRYR) the chain is Cytoplasmic. A helical transmembrane segment spans residues 257 to 281 (FVRSVMSIIDVVAILPYYIGLVMTD). Topologically, residues 282–287 (NEDVSG) are extracellular. Residues 288-307 (AFVTLRVFRVFRIFKFSRHS) form a helical; Voltage-sensor membrane-spanning segment. The Cytoplasmic segment spans residues 308-321 (QGLRILGYTLKSCA). The tract at residues 308–321 (QGLRILGYTLKSCA) is S4-S5 linker. Residues 322 to 345 (SELGFLLFSLTMAIIIFATVMFYA) traverse the membrane as a helical segment. At 346 to 357 (EKGSSASKFTSI) the chain is on the extracellular side. An intramembrane region (helical) is located at residues 358–369 (PAAFWYTIVTMT). Residues Thr-370, Leu-371, Gly-372, and Tyr-373 each coordinate K(+). The Selectivity filter motif lies at 370–375 (TLGYGD). The stretch at 370–377 (TLGYGDMV) is an intramembrane region. Residues 378-380 (PKT) are Extracellular-facing. Residues 381–403 (IAGKIFGSICSLSGVLVIALPVP) form a helical membrane-spanning segment. At 404 to 630 (VIVSNFSRIY…GGNIVRVSAL (227 aa)) the chain is on the cytoplasmic side. The required for dendritic targeting stretch occupies residues 474 to 489 (FETQHHHLLHCLEKTT). Positions 474 to 630 (FETQHHHLLH…GGNIVRVSAL (157 aa)) are important for normal channel activation and inactivation, for interaction with KCNIP2, and probably other family members as well. 4 positions are modified to phosphoserine: Ser-548, Ser-552, Ser-572, and Ser-575. The disordered stretch occupies residues 600-622 (IPTPPVTTPEGDDRPESPEYSGG). Phosphothreonine occurs at positions 602 and 607. Position 616 is a phosphoserine (Ser-616). The PDZ-binding motif lies at 627-630 (VSAL).

The protein belongs to the potassium channel family. D (Shal) (TC 1.A.1.2) subfamily. Kv4.2/KCND2 sub-subfamily. As to quaternary structure, homotetramer or heterotetramer with KCND1 or KCND3. Associates with the regulatory subunits KCNIP2, KCNIP3 and KCNIP4. Interacts with the regulatory subunit KCNIP1; this interaction mediates the capture of both the N- and C-terminus of KCND2, preventing N-type inactivation and stabilizing the S6 conformation, thereby accelerating closed state inactivation and recovery. In vivo, probably exists as heteromeric complex containing variable proportions of KCND1, KCND2, KCND3, KCNIP1, KCNIP2, KCNIP3, KCNIP4, DPP6 and DPP10. The tetrameric channel can associate with up to four regulatory subunits, such as KCNIP2 or KCNIP4. Interaction with four KCNIP4 chains does not reduce interaction with DPP10. Interacts with DLG4 and NCS1/FREQ. Interacts with DLG1. Probably part of a complex consisting of KCNIP1, KCNIP2 isoform 3 and KCND2. Interacts with FLNA, FLNC and DPP10. Identified in a complex with cAMP-dependent protein kinase (PKA), CAV3, AKAP6 and KCND3 in cardiac myocytes. Interacts (via S1 and S2 helices) with DPP6; this interaction stabilizes the conformation of the S1-S2 helices and facilitates S4 conformational change, including S4 sliding up and down, thereby accelerating activation, inactivation, and recovery. In terms of processing, phosphorylation in response to MAPK activation is increased in stimulated dendrites. Interaction with KCNIP2 and DPP6 propomtes phosphorylation by PKA at Ser-552. Phosphorylation at Ser-552 has no effect on interaction with KCNIP3, but is required for the regulation of channel activity by KCNIP3. Phosphorylation at Ser-552 leads to KCND2 internalization. Phosphorylated by MAPK in response to signaling via the metabotropic glutamate receptor GRM5. Phosphorylation at Ser-616 is required for the down-regulation of neuronal A-type currents in response to signaling via GRM5.

It is found in the cell membrane. The protein resides in the cell projection. The protein localises to the dendrite. It localises to the synapse. Its subcellular location is the perikaryon. It is found in the postsynaptic cell membrane. The protein resides in the dendritic spine. The protein localises to the sarcolemma. It localises to the cell junction. Its subcellular location is the membrane. It is found in the caveola. The catalysed reaction is K(+)(in) = K(+)(out). Functionally, voltage-gated potassium channel that mediates transmembrane potassium transport in excitable membranes, primarily in the brain, but also in rodent heart. Mediates the major part of the dendritic A-type current I(SA) in brain neurons. This current is activated at membrane potentials that are below the threshold for action potentials. It regulates neuronal excitability, prolongs the latency before the first spike in a series of action potentials, regulates the frequency of repetitive action potential firing, shortens the duration of action potentials and regulates the back-propagation of action potentials from the neuronal cell body to the dendrites. Contributes to the regulation of the circadian rhythm of action potential firing in suprachiasmatic nucleus neurons, which regulates the circadian rhythm of locomotor activity. Functions downstream of the metabotropic glutamate receptor GRM5 and plays a role in neuronal excitability and in nociception mediated by activation of GRM5. Mediates the transient outward current I(to) in rodent heart left ventricle apex cells, but not in human heart, where this current is mediated by another family member. Forms tetrameric potassium-selective channels through which potassium ions pass in accordance with their electrochemical gradient. The channel alternates between opened and closed conformations in response to the voltage difference across the membrane. Can form functional homotetrameric channels and heterotetrameric channels that contain variable proportions of KCND2 and KCND3; channel properties depend on the type of pore-forming alpha subunits that are part of the channel. In vivo, membranes probably contain a mixture of heteromeric potassium channel complexes. Interaction with specific isoforms of the regulatory subunits KCNIP1, KCNIP2, KCNIP3 or KCNIP4 strongly increases expression at the cell surface and thereby increases channel activity; it modulates the kinetics of channel activation and inactivation, shifts the threshold for channel activation to more negative voltage values, shifts the threshold for inactivation to less negative voltages and accelerates recovery after inactivation. Likewise, interaction with DPP6 or DPP10 promotes expression at the cell membrane and regulates both channel characteristics and activity. Upon depolarization, the channel goes from a resting closed state (C state) to an activated but non-conducting state (C* state), from there, the channel may either inactivate (I state) or open (O state). This is A-type voltage-gated potassium channel KCND2 from Mustela putorius furo (European domestic ferret).